We begin with the raw amino-acid sequence, 103 residues long: Histone H4 (103 aa).

Over residues 1 to 14 the composition is skewed to gly residues; the sequence is MSGRGKGGKGLGKG. Residues 1–20 form a disordered region; sequence MSGRGKGGKGLGKGGAKRHR. An N6-(2-hydroxyisobutyryl)lysine; alternate mark is found at Lys6, Lys9, Lys13, Lys17, Lys32, and Lys45. The residue at position 6 (Lys6) is an N6-acetyl-N6-methyllysine; alternate. Residues Lys6, Lys9, Lys13, Lys17, Lys32, and Lys45 each carry the N6-butyryllysine; alternate modification. Lys6 is subject to N6-glutaryllysine; alternate. N6-propionyllysine; alternate is present on Lys9. Lys13 is subject to N6-acetyl-N6-methyllysine; alternate. Residue Lys13 is modified to N6-glutaryllysine; alternate. Lys17, Lys32, and Lys45 each carry N6-propionyllysine; alternate. The DNA-binding element occupies 17 to 21; sequence KRHRK. An N6-glutaryllysine; alternate modification is found at Lys32. At Lys32 the chain carries N6-succinyllysine; alternate. Residues Lys60, Lys78, Lys80, and Lys92 each carry the N6-glutaryllysine; alternate modification. Lys60 carries the N6-(2-hydroxyisobutyryl)lysine modification. N6-(2-hydroxyisobutyryl)lysine; alternate occurs at positions 78, 80, and 92. Lys78, Lys80, and Lys92 each carry N6-butyryllysine; alternate. 3 positions are modified to N6-propionyllysine; alternate: Lys78, Lys80, and Lys92. Lys78 bears the N6-succinyllysine mark. N6-succinyllysine; alternate is present on Lys92.

This sequence belongs to the histone H4 family. The nucleosome is a histone octamer containing two molecules each of H2A, H2B, H3 and H4 assembled in one H3-H4 heterotetramer and two H2A-H2B heterodimers. The octamer wraps approximately 147 bp of DNA. In terms of processing, butyrylation of histones marks active promoters and competes with histone acetylation. Post-translationally, glutarylation at Lys-92 (H4K91glu) destabilizes nucleosomes by promoting dissociation of the H2A-H2B dimers from nucleosomes.

The protein resides in the nucleus. It localises to the chromosome. Core component of nucleosome. Nucleosomes wrap and compact DNA into chromatin, limiting DNA accessibility to the cellular machineries which require DNA as a template. Histones thereby play a central role in transcription regulation, DNA repair, DNA replication and chromosomal stability. DNA accessibility is regulated via a complex set of post-translational modifications of histones, also called histone code, and nucleosome remodeling. The protein is Histone H4 (H4.1) of Oikopleura dioica (Tunicate).